We begin with the raw amino-acid sequence, 923 residues long: Neuropilin-1 (923 aa).

Positions 1–21 are cleaved as a signal peptide; sequence MERGLPLLCATLALALALAGA. The Extracellular segment spans residues 22-856; that stretch reads FRSDKCGGTI…PGNVLKTLDP (835 aa). 3 disulfide bridges follow: C27-C54, C82-C104, and C147-C173. 2 consecutive CUB domains span residues 27 to 141 and 147 to 265; these read CGGT…YEIF and CSQN…YSVL. N150 carries N-linked (GlcNAc...) asparagine glycosylation. Ca(2+)-binding residues include E195, D209, and D250. C206 and C228 are disulfide-bonded. Residues N261, N300, and N522 are each glycosylated (N-linked (GlcNAc...) asparagine). 2 cysteine pairs are disulfide-bonded: C275-C424 and C431-C583. 2 F5/8 type C domains span residues 275-424 and 431-583; these read CMEA…VYGC and CSGM…LLGC. The O-linked (Xyl...) (chondroitin sulfate) serine; alternate glycan is linked to S612. The O-linked (Xyl...) (heparan sulfate) serine; alternate glycan is linked to S612. Residues 645–811 enclose the MAM domain; that stretch reads TYGFNCEFGW…NHISQEDCAK (167 aa). The tract at residues 820–845 is disordered; the sequence is TEIKIDETGSTPGYEGEGEGDKNISR. O-linked (Xyl...) (chondroitin sulfate) serine glycosylation occurs at S829. Residue N842 is glycosylated (N-linked (GlcNAc...) asparagine). Residues 857–879 traverse the membrane as a helical segment; that stretch reads ILITIIAMSALGVLLGAVCGVVL. At 880–923 the chain is on the cytoplasmic side; it reads YCACWHNGMSERNLSALENYNFELVDGVKLKKDKLNPQSNYSEA. S894 is subject to Phosphoserine.

Belongs to the neuropilin family. Homodimer, and heterodimer with NRP2. Binds PLXNB1. Interacts with FER. Interacts with VEGFA. Interacts with ABCB8/MITOSUR in mitochondria. As to expression, nervous system.

The protein localises to the mitochondrion membrane. The protein resides in the cell membrane. Its subcellular location is the cytoplasm. Receptor involved in the development of the cardiovascular system, in angiogenesis, in the formation of certain neuronal circuits and in organogenesis outside the nervous system. Mediates the chemorepulsant activity of semaphorins. Recognizes a C-end rule (CendR) motif R/KXXR/K on its ligands which causes cellular internalization and vascular leakage. Binds to semaphorin 3A (SEMA3A), the PLGF-2 isoform of PGF, the VEGF165 isoform of VEGFA and VEGFB. Coexpression with KDR results in increased VEGF165 binding to KDR as well as increased chemotaxis. Regulates VEGF-induced angiogenesis. Binding to VEGFA initiates a signaling pathway needed for motor neuron axon guidance and cell body migration, including for the caudal migration of facial motor neurons from rhombomere 4 to rhombomere 6 during embryonic development. Regulates mitochondrial iron transport via interaction with ABCB8/MITOSUR. The protein is Neuropilin-1 of Mus musculus (Mouse).